We begin with the raw amino-acid sequence, 316 residues long: Olfactory receptor 1N2 (316 aa).

At 1 to 28 (MGKPGRVNQTTVSDFLLLGLSEWPEEQP) the chain is on the extracellular side. Asn8 carries N-linked (GlcNAc...) asparagine glycosylation. A helical membrane pass occupies residues 29-49 (LLFGIFLGMYLVTMVGNLLII). The Cytoplasmic segment spans residues 50–60 (LAISSDPHLHT). Residues 61 to 81 (PMYFFLANLSLTDACFTSASI) form a helical membrane-spanning segment. At 82–100 (PKMLANIHTQSQIISYSGC) the chain is on the extracellular side. Cys100 and Cys182 are joined by a disulfide. Residues 101-121 (LAQLYFLLMFGGLDNCLLAVM) traverse the membrane as a helical segment. Residues 122–145 (AYDRYVAICQPLHYSTSMSPQLCA) lie on the Cytoplasmic side of the membrane. Residues 146–166 (LMLGVCWVLTNCPALMHTLLL) traverse the membrane as a helical segment. The Extracellular portion of the chain corresponds to 167–199 (TRVAFCAQKAIPHFYCDPSALLKLACSDTHVNE). Residues 200–220 (LMIITMGLLFLTVPLLLIVFS) form a helical membrane-spanning segment. Residues 221 to 243 (YVRIFWAVFVISSPGGRWKAFST) are Cytoplasmic-facing. A helical transmembrane segment spans residues 244–264 (CGSHLTVVLLFYGSLMGVYLL). Over 265-274 (PPSTYSTERE) the chain is Extracellular. Residues 275 to 295 (SRAAVLYMVIIPTLNPFIYSL) form a helical membrane-spanning segment. The Cytoplasmic segment spans residues 296-316 (RNRDMKEALGKLFVSGKTFFL).

The protein belongs to the G-protein coupled receptor 1 family.

It localises to the membrane. Odorant receptor. This Homo sapiens (Human) protein is Olfactory receptor 1N2 (OR1N2).